A 204-amino-acid chain; its full sequence is NAD(P)H dehydrogenase (quinone) (204 aa).

Residues 4 to 195 (IQIVFYSMYG…AIARFQGAHV (192 aa)) enclose the Flavodoxin-like domain. Residues 10–15 (SMYGHI) and 83–85 (TRF) contribute to the FMN site. Position 12 (Tyr-12) interacts with NAD(+). Position 103 (Trp-103) interacts with substrate. FMN-binding positions include 118-124 (STATQHG) and His-139.

This sequence belongs to the WrbA family. The cofactor is FMN.

It carries out the reaction a quinone + NADH + H(+) = a quinol + NAD(+). It catalyses the reaction a quinone + NADPH + H(+) = a quinol + NADP(+). This Trichlorobacter lovleyi (strain ATCC BAA-1151 / DSM 17278 / SZ) (Geobacter lovleyi) protein is NAD(P)H dehydrogenase (quinone).